The primary structure comprises 374 residues: Speckle-type POZ protein B (374 aa).

The region spanning 31 to 161 is the MATH domain; the sequence is KFSYMWTINN…DDKLTLFCEV (131 aa). The tract at residues 71–191 is required for nuclear localization; that stretch reads VNPKGLDEES…PECRLSDELG (121 aa). In terms of domain architecture, BTB spans 173 to 297; the sequence is QNTMNMVKVP…MCEEALCSNL (125 aa). Positions 297 to 355 are homodimerization; it reads LSVENAAEILILADLHSADQLKTQAVDFINYHASDVMETSGWKSMVVSHPHLVAEAYRS.

This sequence belongs to the Tdpoz family. Homodimer. Part of cullin-RING-based BCR (BTB-CUL3-RBX1) E3 ubiquitin-protein ligase complexes that contain CUL3 and SPOP, plus a target protein.

It is found in the nucleus. It localises to the nucleus speckle. Its pathway is protein modification; protein ubiquitination. Functionally, component of a cullin-RING-based BCR (BTB-CUL3-RBX1) E3 ubiquitin-protein ligase complex that mediates the ubiquitination of target proteins, leading most often to their proteasomal degradation. The chain is Speckle-type POZ protein B (spop-b) from Xenopus laevis (African clawed frog).